Consider the following 313-residue polypeptide: Nucleotide-binding protein Swit_0399 (313 aa).

An ATP-binding site is contributed by 20–27 (GMSGSGKK). 73–76 (DSRT) contributes to the GTP binding site. Positions 289 to 313 (PTVRHRDLTRQKSNAEESTVPGVGS) are disordered. Positions 292-303 (RHRDLTRQKSNA) are enriched in basic and acidic residues.

It belongs to the RapZ-like family.

Functionally, displays ATPase and GTPase activities. The sequence is that of Nucleotide-binding protein Swit_0399 from Rhizorhabdus wittichii (strain DSM 6014 / CCUG 31198 / JCM 15750 / NBRC 105917 / EY 4224 / RW1) (Sphingomonas wittichii).